We begin with the raw amino-acid sequence, 119 residues long: Fluoride-specific ion channel FluC (119 aa).

3 consecutive transmembrane segments (helical) span residues leucine 37–valine 54, leucine 61–threonine 83, and alanine 93–leucine 112. 2 residues coordinate Na(+): glycine 69 and threonine 72.

Belongs to the fluoride channel Fluc/FEX (TC 1.A.43) family.

It localises to the cell inner membrane. The catalysed reaction is fluoride(in) = fluoride(out). Na(+) is not transported, but it plays an essential structural role and its presence is essential for fluoride channel function. In terms of biological role, fluoride-specific ion channel. Important for reducing fluoride concentration in the cell, thus reducing its toxicity. This is Fluoride-specific ion channel FluC from Neisseria meningitidis serogroup C (strain 053442).